The following is a 192-amino-acid chain: Peptidyl-tRNA hydrolase (192 aa).

A tRNA-binding site is contributed by Tyr17. Catalysis depends on His22, which acts as the Proton acceptor. Positions 68, 70, and 116 each coordinate tRNA.

It belongs to the PTH family. In terms of assembly, monomer.

The protein localises to the cytoplasm. It carries out the reaction an N-acyl-L-alpha-aminoacyl-tRNA + H2O = an N-acyl-L-amino acid + a tRNA + H(+). Its function is as follows. Hydrolyzes ribosome-free peptidyl-tRNAs (with 1 or more amino acids incorporated), which drop off the ribosome during protein synthesis, or as a result of ribosome stalling. Functionally, catalyzes the release of premature peptidyl moieties from peptidyl-tRNA molecules trapped in stalled 50S ribosomal subunits, and thus maintains levels of free tRNAs and 50S ribosomes. In Buchnera aphidicola subsp. Cinara cedri (strain Cc), this protein is Peptidyl-tRNA hydrolase.